We begin with the raw amino-acid sequence, 448 residues long: MKHRYLPATDQDKKEMLEAIGVERIDELFSDIPESVRFKGEYQIKKAKSETELTKELTKLAAKNKDTVTYASFLGAGVYDHYQPVIVDHVISRSEFYTAYTPYQPEISQGELQAIFEFQTMICELTGMDISNSSMYDGGTALAEAAMLASGHTKKKKIVVSETVHPESREVLKTYAKGQYIDVVEVPSKNGTADLEALDEAVCEDTAAVIVQYPNFFGRIEPLKDIKPIAHKGKSMFIVSANPLALGLLTPPGALGADIVVGDAQPFGIPAAFGGPHCGFFAVTKKLMRKVPGRLVGQTEDENGKRGFVLTLQAREQHIRRDKATSNICSNQALNALAASVAMTALGKKGVKEIAWQNLQKAAYAKEAAKRAGLEVAFEGPMFNEFVIRLNEPVEKANERLLEKNIIGGYDLGASYPDLKRHMLIAVTELRTKEEIDTLMNELGDCHE.

The protein belongs to the GcvP family. N-terminal subunit subfamily. The glycine cleavage system is composed of four proteins: P, T, L and H. In this organism, the P 'protein' is a heterodimer of two subunits.

It carries out the reaction N(6)-[(R)-lipoyl]-L-lysyl-[glycine-cleavage complex H protein] + glycine + H(+) = N(6)-[(R)-S(8)-aminomethyldihydrolipoyl]-L-lysyl-[glycine-cleavage complex H protein] + CO2. Functionally, the glycine cleavage system catalyzes the degradation of glycine. The P protein binds the alpha-amino group of glycine through its pyridoxal phosphate cofactor; CO(2) is released and the remaining methylamine moiety is then transferred to the lipoamide cofactor of the H protein. In Bacillus licheniformis (strain ATCC 14580 / DSM 13 / JCM 2505 / CCUG 7422 / NBRC 12200 / NCIMB 9375 / NCTC 10341 / NRRL NRS-1264 / Gibson 46), this protein is Probable glycine dehydrogenase (decarboxylating) subunit 1.